Reading from the N-terminus, the 638-residue chain is Pentatricopeptide repeat-containing protein At1g59720, chloroplastic/mitochondrial (638 aa).

The transit peptide at Met-1–Ser-40 directs the protein to the chloroplast and mitochondrion. PPR repeat units follow at residues Thr-82–His-112, Ser-113–Ser-148, Asp-150–Gly-184, Asp-185–Arg-215, Ser-216–Ser-246, Asp-250–Lys-280, Asp-288–Arg-318, Asp-319–Val-353, Asn-356–Glu-390, and Ala-392–Lys-422. Positions Ile-427–Asn-510 are type E motif. The interval Gly-511–Arg-541 is type E(+) motif. The segment at Ser-542–Trp-638 is type DYW motif.

The protein belongs to the PPR family. PCMP-H subfamily. As to quaternary structure, interacts with ORRM1. Interacts with VAR3/OZ1.

It localises to the plastid. It is found in the chloroplast. The protein localises to the mitochondrion. Involved in multiple sites RNA editing events in chloroplasts. Involved in the editing of the site 2 of ndhB (ndhB-2) and site 3 of ndhD (ndhD-3) transcripts, which are two plastid-encoded subunits of the chloroplast NAD(P)H dehydrogenase (NDH) complex. Required for the activity of the NDH complex of the photosynthetic electron transport chain. The polypeptide is Pentatricopeptide repeat-containing protein At1g59720, chloroplastic/mitochondrial (PCMP-H51) (Arabidopsis thaliana (Mouse-ear cress)).